The primary structure comprises 309 residues: MPKVRTKDLIEQFQLELISGEEGIHRPIDTSDLSRPGIEMAGFFTYYPADRVQLLGKTELTFFDTLTSDQKQERMKALCTEETPCIIVTRNQDVPDELLQASRESGMPLLRSSQTTTRLSSRLTNYLEGKLAPTTAVHGVLVDIYGVGVLITGQSGVGKSETALELVKRGHRLVADDSVEIRQEDEDMLVGSSPDLIEHLLEIRGLGIINVMTLFGAGAVRNYKRITLVINLEIWDQKKNYDRLGLDEEKMKIIDTELTKITLPVRPGRNLAVIIEVAAMNFRLKRMGVNAAQQFSERLMSAIELGNQE.

Catalysis depends on residues H138 and K159. 153 to 160 (GQSGVGKS) is a binding site for ATP. S160 provides a ligand contact to Mg(2+). The active-site Proton acceptor; for phosphorylation activity. Proton donor; for dephosphorylation activity is D177. The segment at 201-210 (LEIRGLGIIN) is important for the catalytic mechanism of both phosphorylation and dephosphorylation. Residue E202 coordinates Mg(2+). R243 is an active-site residue. The important for the catalytic mechanism of dephosphorylation stretch occupies residues 264-269 (PVRPGR).

It belongs to the HPrK/P family. Homohexamer. Requires Mg(2+) as cofactor.

The enzyme catalyses [HPr protein]-L-serine + ATP = [HPr protein]-O-phospho-L-serine + ADP + H(+). The catalysed reaction is [HPr protein]-O-phospho-L-serine + phosphate + H(+) = [HPr protein]-L-serine + diphosphate. Its function is as follows. Catalyzes the ATP- as well as the pyrophosphate-dependent phosphorylation of a specific serine residue in HPr, a phosphocarrier protein of the phosphoenolpyruvate-dependent sugar phosphotransferase system (PTS). HprK/P also catalyzes the pyrophosphate-producing, inorganic phosphate-dependent dephosphorylation (phosphorolysis) of seryl-phosphorylated HPr (P-Ser-HPr). The two antagonistic activities of HprK/P are regulated by several intracellular metabolites, which change their concentration in response to the absence or presence of rapidly metabolisable carbon sources (glucose, fructose, etc.) in the growth medium. Also phosphorylates/dephosphorylates the HPr-like catabolite repression protein crh on a specific serine residue. Therefore, by controlling the phosphorylation state of HPr and crh, HPrK/P is a sensor enzyme that plays a major role in the regulation of carbon metabolism and sugar transport: it mediates carbon catabolite repression (CCR), and regulates PTS-catalyzed carbohydrate uptake and inducer exclusion. This Bacillus anthracis (strain A0248) protein is HPr kinase/phosphorylase.